We begin with the raw amino-acid sequence, 181 residues long: Coatomer subunit zeta-3 (181 aa).

It belongs to the adaptor complexes small subunit family. In terms of assembly, oligomeric complex that consists of at least the alpha, beta, beta', gamma, delta, epsilon and zeta subunits.

It is found in the cytoplasm. It localises to the golgi apparatus membrane. The protein localises to the cytoplasmic vesicle. Its subcellular location is the COPI-coated vesicle membrane. Functionally, the coatomer is a cytosolic protein complex that binds to dilysine motifs and reversibly associates with Golgi non-clathrin-coated vesicles, which further mediate biosynthetic protein transport from the ER, via the Golgi up to the trans Golgi network. Coatomer complex is required for budding from Golgi membranes, and is essential for the retrograde Golgi-to-ER transport of dilysine-tagged proteins. The zeta subunit may be involved in regulating the coat assembly and, hence, the rate of biosynthetic protein transport due to its association-dissociation properties with the coatomer complex. This Arabidopsis thaliana (Mouse-ear cress) protein is Coatomer subunit zeta-3.